A 1563-amino-acid polypeptide reads, in one-letter code: NACHT domain- and WD repeat-containing protein 1 (1563 aa).

The stretch at 274 to 314 (TNHQVLEQLRELELARQELGWLYQEIRHHLWQSTESTKVFC) is one WD 1 repeat. The 331-residue stretch at 336 to 666 (TPLVLFGPPG…HRQLSQVIQV (331 aa)) folds into the NACHT domain. 342–349 (GPPGIGKT) provides a ligand contact to ATP. WD repeat units lie at residues 866-905 (GCHK…VVHV), 908-947 (GHTA…EKVT), 954-994 (QNPT…LVFC), 998-1037 (DVSD…LQEK), 1044-1082 (KEET…LLEK), 1126-1165 (EHED…TLLN), 1168-1207 (EGVG…KLQS), 1212-1251 (LDRT…EQDC), 1253-1292 (DTSN…DVLC), 1346-1385 (QLPE…FPLE), 1386-1425 (AHGS…GMFE), and 1431-1470 (SCCR…LLAV). Residues 1534-1563 (AAEASQDAEPVAVEGKESKSNKRSQVCLIL) form a disordered region.

As to quaternary structure, may interact with HSP90AA1, HSP90AB1 and BAG2.

Its subcellular location is the cytoplasm. It is found in the cytosol. Its function is as follows. May play a role in the control of androgen receptor (AR) protein steady-state levels. This Mus musculus (Mouse) protein is NACHT domain- and WD repeat-containing protein 1 (Nwd1).